Here is a 342-residue protein sequence, read N- to C-terminus: MFEVTVVSSEFDAKIQQKIDTKTKPLGALGALETLAMTIARVLGPDKPQITKPTLLVFAGDHGIAASGVSIAPSEVTTQMVMNFLKGGAAINLFCAQGGITMEVIDCGIAQEIHDQPKLINHRLGAGTGAIHREPAMTLGAVKQGFAMARERVALHHGRGCNLIAFGEMGIGNTSSAAAIMAALMGREAAECVGRGTGIDAATLARKQLLVEQALFLHREQLGDPYGVLACLGGFEIVQMTGAILAAAELKMLVLIDGFIATAAALAAVTIAPHARDYMIFAHESGERGHKLMLEHLNAQPLLSLGLRLGEGTGAALAVPLVQAAATFYNEMASLEEMGISI.

Residue Glu311 is the Proton acceptor of the active site.

This sequence belongs to the CobT family.

The catalysed reaction is 5,6-dimethylbenzimidazole + nicotinate beta-D-ribonucleotide = alpha-ribazole 5'-phosphate + nicotinate + H(+). The protein operates within nucleoside biosynthesis; alpha-ribazole biosynthesis; alpha-ribazole from 5,6-dimethylbenzimidazole: step 1/2. Catalyzes the synthesis of alpha-ribazole-5'-phosphate from nicotinate mononucleotide (NAMN) and 5,6-dimethylbenzimidazole (DMB). This chain is Nicotinate-nucleotide--dimethylbenzimidazole phosphoribosyltransferase, found in Shewanella loihica (strain ATCC BAA-1088 / PV-4).